The primary structure comprises 265 residues: Uridylate kinase (265 aa).

The tract at residues 1–29 (MTESREPHVAGSAAPRPEPANGLASGQPS) is disordered. Residue 40 to 43 (KLGG) coordinates ATP. Gly81 serves as a coordination point for UMP. ATP is bound by residues Gly82 and Arg86. UMP contacts are provided by residues Asp101 and 162-169 (MGLPYFST). Residues Phe195 and Asp198 each coordinate ATP.

This sequence belongs to the UMP kinase family. In terms of assembly, homohexamer.

Its subcellular location is the cytoplasm. It carries out the reaction UMP + ATP = UDP + ADP. It functions in the pathway pyrimidine metabolism; CTP biosynthesis via de novo pathway; UDP from UMP (UMPK route): step 1/1. With respect to regulation, inhibited by UTP. Functionally, catalyzes the reversible phosphorylation of UMP to UDP. The polypeptide is Uridylate kinase (Mycolicibacterium paratuberculosis (strain ATCC BAA-968 / K-10) (Mycobacterium paratuberculosis)).